The sequence spans 87 residues: Selenoprotein W (87 aa).

The segment at residues 10 to 13 (CGAU) is a cross-link (cysteinyl-selenocysteine (Cys-Sec); redox-active). Position 13 (U13) is a non-standard amino acid, selenocysteine. C37 carries the post-translational modification S-glutathionyl cysteine.

Belongs to the SelWTH family. Selenoprotein W subfamily. Interacts with DPYSL2, PRDX1, YWHAB, YWHAG, HSP70 and HSP90. Highest levels detected in skeletal muscle, tongue, heart and brain. Expressed at significantly higher levels in female skeletal muscle than in male and at slightly higher levels in female cardiac muscle than in male (at protein level). Also detected at low levels in liver.

It localises to the cytoplasm. Functionally, plays a role as a glutathione (GSH)-dependent antioxidant. May be involved in a redox-related process. May play a role in the myopathies of selenium deficiency. This Macaca mulatta (Rhesus macaque) protein is Selenoprotein W.